The chain runs to 120 residues: Ribonuclease P protein component (120 aa).

The protein belongs to the RnpA family. In terms of assembly, consists of a catalytic RNA component (M1 or rnpB) and a protein subunit.

The enzyme catalyses Endonucleolytic cleavage of RNA, removing 5'-extranucleotides from tRNA precursor.. Its function is as follows. RNaseP catalyzes the removal of the 5'-leader sequence from pre-tRNA to produce the mature 5'-terminus. It can also cleave other RNA substrates such as 4.5S RNA. The protein component plays an auxiliary but essential role in vivo by binding to the 5'-leader sequence and broadening the substrate specificity of the ribozyme. This is Ribonuclease P protein component from Chelativorans sp. (strain BNC1).